A 313-amino-acid chain; its full sequence is Solute carrier family 35 member E3 (313 aa).

9 helical membrane-spanning segments follow: residues 17–37, 40–60, 71–91, 126–146, 154–174, 187–206, 225–245, 252–272, and 275–295; these read GLLFNLLVSICIVFLNKWIYV, GFPNMSLTLVHFVVTWLGLYI, SLPLSKLLLLALSFCGFVVFT, FSVRIQLTLIPITVGVILNSY, LGMVFAALGVVVTSLYQVWVG, LLYYQAPMSSAMLLVAVPFF, LMVLLSGIIAFMVNLSIYWII, TYNMFGHFKFCITLCGGYILF, and PLSVNQGLGILCTLFGILTYT.

The protein belongs to the TPT transporter family. SLC35E subfamily.

It is found in the membrane. Putative transporter. This is Solute carrier family 35 member E3 (Slc35e3) from Mus musculus (Mouse).